A 210-amino-acid polypeptide reads, in one-letter code: Viral protein 1 (210 aa).

This is Viral protein 1 from Chaetoceros (Chaetoceros sp. DNA virus 7).